The chain runs to 253 residues: Probable transcriptional regulatory protein RBE_0568 (253 aa).

A disordered region spans residues Met-1 to Arg-21.

Belongs to the TACO1 family.

Its subcellular location is the cytoplasm. The sequence is that of Probable transcriptional regulatory protein RBE_0568 from Rickettsia bellii (strain RML369-C).